A 393-amino-acid polypeptide reads, in one-letter code: Putative odorant receptor 69a, isoform A (393 aa).

The Cytoplasmic segment spans residues 1 to 39; sequence MQLHDHMKYIDLGCKMACIPRYQWKGRPTERQFYASEQR. A helical transmembrane segment spans residues 40 to 60; that stretch reads IVFLLGTICQIFQITGVLIYW. The Extracellular segment spans residues 61-76; it reads YCNGRLATETGTFVAQ. The chain crosses the membrane as a helical span at residues 77–97; the sequence is LSEMCSSFCLTFVGFCNVYAI. Topologically, residues 98–139 are cytoplasmic; the sequence is STNRNQIETLLEELHQIYPRYRKNHYRCQHYFDMAMTIMRIE. The helical transmembrane segment at 140-160 threads the bilayer; it reads FLFYMILYVYYNSAPLWVLLW. Residues 161-189 are Extracellular-facing; that stretch reads EHLHEEYDLSFKTQTNTWFPWKVHGSALG. Residues 190 to 210 traverse the membrane as a helical segment; it reads FGMAVLSITVGSFVGVGFSIV. The Cytoplasmic segment spans residues 211–269; sequence TQNLICLLTFQLKLHYDGISSQLVSLDCRRPGAHKELSILIAHHSRILQLGDQVNDIMN. A helical transmembrane segment spans residues 270 to 290; sequence FVFGSSLVGATIAICMSSVSI. Residues 291 to 304 are Extracellular-facing; sequence MLLDLASAFKYASG. Residues 305 to 325 traverse the membrane as a helical segment; sequence LVAFVLYNFVICYMGTEVTLA. Topologically, residues 326–365 are cytoplasmic; that stretch reads SGKVLPAAFYNNWYEGDLVYRRMLLILMMRATKPYMWKTY. The chain crosses the membrane as a helical span at residues 366-386; sequence KLAPVSITTYMATLKFSYQMF. Residues 387–393 are Extracellular-facing; sequence TCVRSLK.

Belongs to the insect chemoreceptor superfamily. Heteromeric odorant receptor channel (TC 1.A.69) family. Or49a subfamily. As to quaternary structure, interacts with Orco. Complexes exist early in the endomembrane system in olfactory sensory neurons (OSNs), coupling these complexes to the conserved ciliary trafficking pathway. In terms of tissue distribution, expressed in olfactory sensory neurons in the antenna.

The protein resides in the cell membrane. Its function is as follows. Odorant receptor which mediates acceptance or avoidance behavior, depending on its substrates. The odorant receptor repertoire encodes a large collection of odor stimuli that vary widely in identity, intensity, and duration. May form a complex with Orco to form odorant-sensing units, providing sensitive and prolonged odorant signaling and calcium permeability. This chain is Putative odorant receptor 69a, isoform A (Or69a), found in Drosophila melanogaster (Fruit fly).